The chain runs to 577 residues: Cleavage stimulation factor subunit 2 (577 aa).

The residue at position 14 (S14) is a Phosphoserine. Residues 16-94 (RSVFVGNIPY…RALRVDNAAS (79 aa)) enclose the RRM domain. The segment at 108 to 248 (APVIESPYGE…VNGAPPLMQA (141 aa)) is interactions with CSTF3 and SYMPK. K189 is covalently cross-linked (Glycyl lysine isopeptide (Lys-Gly) (interchain with G-Cter in SUMO2)). The segment at 206–243 (QPVHGAGPGSGSNVSMNQQNPQAPQAQSLGGMHVNGAP) is disordered. A compositionally biased stretch (low complexity) spans 222 to 232 (NQQNPQAPQAQ). R308 is modified (omega-N-methylarginine). Residues 340 to 409 (EVEPRGYLGP…DGRGGRDPRG (70 aa)) form a disordered region. The segment covering 360–373 (PGHESRGPPPHELR) has biased composition (basic and acidic residues). One copy of the 1; approximate repeat lies at 410 to 414 (IDARG). The tract at residues 410–469 (IDARGMEARAMEARGLDARGLEARAMEARAMEARAMEARAMEARAMEVRGMEARGMDTRG) is 12 X 5 AA tandem repeats of M-E-A-R-[AG]. Repeat copies occupy residues 415–419 (MEARA) and 420–424 (MEARG). The 4; approximate repeat unit spans residues 425 to 429 (LDARG). A 5; approximate repeat occupies 430–434 (LEARA). Tandem repeats lie at residues 435–439 (MEARA), 440–444 (MEARA), 445–449 (MEARA), and 450–454 (MEARA). The stretch at 455–459 (MEVRG) is one 10; approximate repeat. The stretch at 460–464 (MEARG) is repeat 11. The 12; approximate repeat unit spans residues 465–469 (MDTRG). Omega-N-methylarginine occurs at positions 468 and 475. The interval 508–532 (GMQGASIQGGSQPGGFSPGQNQVTP) is disordered. The interval 514–577 (IQGGSQPGGF…EQIQKSTGAP (64 aa)) is interaction with RPO2TC1. S518 and S524 each carry phosphoserine.

The CSTF complex is composed of CSTF1 (50 kDa subunit), CSTF2 (64 kDa subunit) and CSTF3 (77 kDa subunit). CSTF2 directly interacts with CSTF3, SYMPK and RPO2TC1. Interacts with HSF1 in heat-stressed cells. Interacts with CPSF2, CPSF3 and FIP1L1. Interacts with DDX1.

It localises to the nucleus. One of the multiple factors required for polyadenylation and 3'-end cleavage of mammalian pre-mRNAs. This subunit is directly involved in the binding to pre-mRNAs. The sequence is that of Cleavage stimulation factor subunit 2 (CSTF2) from Homo sapiens (Human).